The following is a 256-amino-acid chain: 5-keto-4-deoxy-D-glucarate aldolase (256 aa).

His50 acts as the Proton acceptor in catalysis. Gln151 contributes to the substrate binding site. Glu153 lines the Mg(2+) pocket. Residues Ser178 and Asp179 each coordinate substrate. Asp179 is a binding site for Mg(2+).

This sequence belongs to the HpcH/HpaI aldolase family. KDGluc aldolase subfamily. Homohexamer; trimer of dimers. It depends on Mg(2+) as a cofactor.

The enzyme catalyses 5-dehydro-4-deoxy-D-glucarate = 2-hydroxy-3-oxopropanoate + pyruvate. It carries out the reaction 2-dehydro-3-deoxy-D-glucarate = 2-hydroxy-3-oxopropanoate + pyruvate. It participates in carbohydrate acid metabolism; galactarate degradation; D-glycerate from galactarate: step 2/3. Catalyzes the reversible retro-aldol cleavage of both 5-keto-4-deoxy-D-glucarate and 2-keto-3-deoxy-D-glucarate to pyruvate and tartronic semialdehyde. This chain is 5-keto-4-deoxy-D-glucarate aldolase, found in Salmonella agona (strain SL483).